The following is a 565-amino-acid chain: Zinc finger protein 143 (565 aa).

C2H2-type zinc fingers lie at residues 230–254 (FRCDYEGCGKLYTTAHHLKVHERSH), 260–284 (YQCDHGSCRKAFATGYGLKSHVRTH), 290–314 (YRCSEENCTKSFKTSGDLQKHVRTH), 320–344 (FKCPFEGCGRSFTTSNIRKVHIRTH), 350–374 (YYCSEPGCGRAFASATNYKNHVRIH), 380–404 (YVCTVPGCDKRFTEYSSLYKHHVVH), and 410–433 (YNCNHCGKTYKQISTLAMHKRTAH).

The protein belongs to the GLI C2H2-type zinc-finger protein family.

The protein localises to the nucleus. Its function is as follows. Transcriptional activator. Activates the gene for selenocysteine tRNA (tRNAsec). Binds to the activator element (AE) motif of the selenocysteine tRNA gene promoter. This Xenopus laevis (African clawed frog) protein is Zinc finger protein 143 (znf143).